We begin with the raw amino-acid sequence, 287 residues long: Toxin zeta (287 aa).

Residue 40–47 (GQPGSGKT) participates in ATP binding. Positions 250 to 287 (MVQNQHQETPEFKAIQQKMESLQPPTPPIPKTPKLPGI) are disordered. Residues 273 to 287 (PPTPPIPKTPKLPGI) show a composition bias toward pro residues.

The protein belongs to the zeta toxin family. In the presence of the epsilon antitoxin, forms an inactive PezA(2)PezT(2) heterotetramer.

The enzyme catalyses UDP-N-acetyl-alpha-D-glucosamine + ATP = UDP-N-acetyl-alpha-D-glucosamine 3'-phosphate + ADP + H(+). Toxic component of a type II toxin-antitoxin (TA) system. Phosphorylates UDP-N-acetyl-D-glucosamine (UNAG) on the 3'-hydroxyl group of the N-acetyl-D-glucosamine moiety, yielding UNAG-3P. UNAG-3P inhibits MurA, the first committed step in cell wall synthesis, which is then blocked. Phosphorylation is inhibited by cognate epsilon antitoxin. Part of a postsegregational killing (PSK) system involved in the killing of plasmid-free cells. The zeta toxin induces programmed cell death. The chain is Toxin zeta from Streptococcus agalactiae.